We begin with the raw amino-acid sequence, 265 residues long: 5'-nucleotidase SurE (265 aa).

4 residues coordinate a divalent metal cation: Asp-8, Asp-9, Ser-39, and Asn-96.

This sequence belongs to the SurE nucleotidase family. It depends on a divalent metal cation as a cofactor.

It is found in the cytoplasm. It carries out the reaction a ribonucleoside 5'-phosphate + H2O = a ribonucleoside + phosphate. In terms of biological role, nucleotidase that shows phosphatase activity on nucleoside 5'-monophosphates. The chain is 5'-nucleotidase SurE from Dehalococcoides mccartyi (strain ATCC BAA-2100 / JCM 16839 / KCTC 5957 / BAV1).